Reading from the N-terminus, the 140-residue chain is Large ribosomal subunit protein uL11 (140 aa).

This sequence belongs to the universal ribosomal protein uL11 family. As to quaternary structure, part of the ribosomal stalk of the 50S ribosomal subunit. Interacts with L10 and the large rRNA to form the base of the stalk. L10 forms an elongated spine to which L12 dimers bind in a sequential fashion forming a multimeric L10(L12)X complex. In terms of processing, one or more lysine residues are methylated.

Its function is as follows. Forms part of the ribosomal stalk which helps the ribosome interact with GTP-bound translation factors. In Solidesulfovibrio magneticus (strain ATCC 700980 / DSM 13731 / RS-1) (Desulfovibrio magneticus), this protein is Large ribosomal subunit protein uL11.